We begin with the raw amino-acid sequence, 85 residues long: MNERGRKRVLLGTVVSNKMDKSVVVEVERLVQHRVYKKYITSHKKYAAHDETQLCQIGDMVKITESRPLSKTKRFRVSEIVKKAV.

This sequence belongs to the universal ribosomal protein uS17 family. As to quaternary structure, part of the 30S ribosomal subunit.

One of the primary rRNA binding proteins, it binds specifically to the 5'-end of 16S ribosomal RNA. This chain is Small ribosomal subunit protein uS17, found in Desulforapulum autotrophicum (strain ATCC 43914 / DSM 3382 / VKM B-1955 / HRM2) (Desulfobacterium autotrophicum).